The sequence spans 211 residues: MRLTAKQVTWLKVCLHLAGLLPFLWLVWAINHGGLGADPVKDIQHFTGLTALKFLLAALLITPLARYAKQPLLIRTRRLLGLWCFAWATLHLTSYALLELGVNNLALLGKELITRPYLTLGIISWVILLALAFTSTQSMQRKLGKHWQQLHNFVYLVAILAPIHYLWSVKIISPQPLIYAGLAVLLLALRYKKLLSLFNRLRKQAHNKLSL.

Transmembrane regions (helical) follow at residues 45-65, 82-102, 116-136, 153-173, and 178-198; these read HFTG…TPLA, LWCF…ELGV, PYLT…FTST, FVYL…KIIS, and IYAG…LSLF.

It belongs to the MsrQ family. Heterodimer of a catalytic subunit (MsrP) and a heme-binding subunit (MsrQ). The cofactor is FMN. It depends on heme b as a cofactor.

It is found in the cell inner membrane. Functionally, part of the MsrPQ system that repairs oxidized periplasmic proteins containing methionine sulfoxide residues (Met-O), using respiratory chain electrons. Thus protects these proteins from oxidative-stress damage caused by reactive species of oxygen and chlorine generated by the host defense mechanisms. MsrPQ is essential for the maintenance of envelope integrity under bleach stress, rescuing a wide series of structurally unrelated periplasmic proteins from methionine oxidation, including the primary periplasmic chaperone SurA and the lipoprotein Pal. MsrQ provides electrons for reduction to the reductase catalytic subunit MsrP, using the quinone pool of the respiratory chain. The polypeptide is Protein-methionine-sulfoxide reductase heme-binding subunit MsrQ (Escherichia coli O127:H6 (strain E2348/69 / EPEC)).